Here is a 98-residue protein sequence, read N- to C-terminus: Integration host factor subunit alpha (98 aa).

The disordered stretch occupies residues 49–71 (FGNFDLRDKNQRPGRNPKTGEDI).

It belongs to the bacterial histone-like protein family. As to quaternary structure, heterodimer of an alpha and a beta chain.

In terms of biological role, this protein is one of the two subunits of integration host factor, a specific DNA-binding protein that functions in genetic recombination as well as in transcriptional and translational control. The sequence is that of Integration host factor subunit alpha from Pectobacterium atrosepticum (strain SCRI 1043 / ATCC BAA-672) (Erwinia carotovora subsp. atroseptica).